The sequence spans 491 residues: Glutamate--tRNA ligase (491 aa).

The short motif at 9–19 (PSPTGTPHVGL) is the 'HIGH' region element. Residues 253 to 257 (KLSKR) carry the 'KMSKS' region motif. Lys-256 is an ATP binding site.

It belongs to the class-I aminoacyl-tRNA synthetase family. Glutamate--tRNA ligase type 1 subfamily. Monomer.

The protein localises to the cytoplasm. It catalyses the reaction tRNA(Glu) + L-glutamate + ATP = L-glutamyl-tRNA(Glu) + AMP + diphosphate. Catalyzes the attachment of glutamate to tRNA(Glu) in a two-step reaction: glutamate is first activated by ATP to form Glu-AMP and then transferred to the acceptor end of tRNA(Glu). This chain is Glutamate--tRNA ligase, found in Mycolicibacterium gilvum (strain PYR-GCK) (Mycobacterium gilvum (strain PYR-GCK)).